A 316-amino-acid polypeptide reads, in one-letter code: DNA-directed RNA polymerase III subunit RPC6 (316 aa).

Alanine 2 is modified (N-acetylalanine). Residues lysine 5 and lysine 7 each participate in a glycyl lysine isopeptide (Lys-Gly) (interchain with G-Cter in SUMO2) cross-link. Positions 287, 290, 296, and 307 each coordinate [4Fe-4S] cluster.

The protein belongs to the eukaryotic RPC34/RPC39 RNA polymerase subunit family. As to quaternary structure, component of the RNA polymerase III complex consisting of 17 subunits: a ten-subunit horseshoe-shaped catalytic core composed of POLR3A/RPC1, POLR3B/RPC2, POLR1C/RPAC1, POLR1D/RPAC2, POLR3K/RPC10, POLR2E/RPABC1, POLR2F/RPABC2, POLR2H/RPABC3, POLR2K/RPABC4 and POLR2L/RPABC5; a mobile stalk composed of two subunits POLR3H/RPC8 and CRCP/RPC9, protruding from the core and functioning primarily in transcription initiation; and additional subunits homologous to general transcription factors of the RNA polymerase II machinery, POLR3C/RPC3-POLR3F/RPC6-POLR3G/RPC7 heterotrimer required for transcription initiation and POLR3D/RPC4-POLR3E/RPC5 heterodimer involved in both transcription initiation and termination. Directly interacts with POLR3C. Interacts with TBP and TFIIIB90 and GTF3C4. Interacts with MAF1. As part of the RNA polymerase III complex, interacts with PKP2.

The protein resides in the nucleus. In terms of biological role, DNA-dependent RNA polymerase catalyzes the transcription of DNA into RNA using the four ribonucleoside triphosphates as substrates. Specific peripheric component of RNA polymerase III (Pol III) which synthesizes small non-coding RNAs including 5S rRNA, snRNAs, tRNAs and miRNAs from at least 500 distinct genomic loci. Part of POLR3C/RPC3-POLR3F/RPC6-POLR3G/RPC7 heterotrimer that coordinates the dynamics of Pol III stalk and clamp modules during the transition from apo to elongation state. Pol III plays a key role in sensing and limiting infection by intracellular bacteria and DNA viruses, including varicella zoster virus. Acts as a nuclear and cytosolic DNA sensor detecting AT-rich DNA, involved in innate immune response. Can sense non-self dsDNA that serves as template for transcription into dsRNA. The non-self RNA polymerase III transcripts, such as Epstein-Barr virus-encoded RNAs (EBERs) induce type I interferon and NF-kappa-B through the RIG-I pathway. Preferentially binds double-stranded DNA (dsDNA). The protein is DNA-directed RNA polymerase III subunit RPC6 of Mus musculus (Mouse).